The primary structure comprises 439 residues: tRNA-2-methylthio-N(6)-dimethylallyladenosine synthase (439 aa).

In terms of domain architecture, MTTase N-terminal spans 2–119 (KYIYIKTWGC…LAQMIDKVEK (118 aa)). [4Fe-4S] cluster is bound by residues C11, C48, C82, C156, C160, and C163. A Radical SAM core domain is found at 142-374 (KKTGYTASIS…QNCINKQTMS (233 aa)). One can recognise a TRAM domain in the interval 377–439 (RKMLKSTQSV…HTHSLQGELI (63 aa)).

It belongs to the methylthiotransferase family. MiaB subfamily. Monomer. The cofactor is [4Fe-4S] cluster.

It localises to the cytoplasm. It carries out the reaction N(6)-dimethylallyladenosine(37) in tRNA + (sulfur carrier)-SH + AH2 + 2 S-adenosyl-L-methionine = 2-methylsulfanyl-N(6)-dimethylallyladenosine(37) in tRNA + (sulfur carrier)-H + 5'-deoxyadenosine + L-methionine + A + S-adenosyl-L-homocysteine + 2 H(+). Catalyzes the methylthiolation of N6-(dimethylallyl)adenosine (i(6)A), leading to the formation of 2-methylthio-N6-(dimethylallyl)adenosine (ms(2)i(6)A) at position 37 in tRNAs that read codons beginning with uridine. This chain is tRNA-2-methylthio-N(6)-dimethylallyladenosine synthase, found in Buchnera aphidicola subsp. Schizaphis graminum (strain Sg).